Consider the following 368-residue polypeptide: Single-stranded DNA-binding protein 3 (368 aa).

The 33-residue stretch at 16-48 (AREKLALYVYEYLLHVGAQKSAQTFLSEIRWEK) folds into the LisH domain. Positions 100–368 (PVLGNIPPND…NYSPSMTMSV (269 aa)) are disordered. Residues 126 to 139 (GSQPSPHAQPPPHN) show a composition bias toward pro residues. Composition is skewed to low complexity over residues 174 to 189 (PNMG…PRGM), 211 to 220 (GPGMPGINMG), and 230 to 248 (PSSA…TYVG). Residues 252-262 (GGGPPGTPIMP) show a composition bias toward pro residues. Over residues 265-276 (ADSTNSSDNIYT) the composition is skewed to polar residues. A compositionally biased stretch (gly residues) spans 295–305 (GSDGPMGGMGG). Residues 326–337 (NSPNNISGISNP) show a composition bias toward low complexity. Polar residues predominate over residues 353-368 (HSFQNDNYSPSMTMSV).

As to expression, expressed in embryonic fibroblasts and chondrocytes.

It is found in the nucleus. Its function is as follows. May be involved in transcription regulation of the alpha 2(I) collagen gene where it binds to the single-stranded polypyrimidine sequences in the promoter region. The sequence is that of Single-stranded DNA-binding protein 3 (SSBP3) from Gallus gallus (Chicken).